We begin with the raw amino-acid sequence, 1390 residues long: DNA-directed RNA polymerase subunit beta'' (1390 aa).

C220, C291, C298, and C301 together coordinate Zn(2+).

This sequence belongs to the RNA polymerase beta' chain family. RpoC2 subfamily. In terms of assembly, in plastids the minimal PEP RNA polymerase catalytic core is composed of four subunits: alpha, beta, beta', and beta''. When a (nuclear-encoded) sigma factor is associated with the core the holoenzyme is formed, which can initiate transcription. The cofactor is Zn(2+).

It localises to the plastid. Its subcellular location is the chloroplast. The catalysed reaction is RNA(n) + a ribonucleoside 5'-triphosphate = RNA(n+1) + diphosphate. DNA-dependent RNA polymerase catalyzes the transcription of DNA into RNA using the four ribonucleoside triphosphates as substrates. This is DNA-directed RNA polymerase subunit beta'' from Populus alba (White poplar).